We begin with the raw amino-acid sequence, 106 residues long: BLOC-1-related complex subunit 7 (106 aa).

This sequence belongs to the BORCS7 family. Component of the BLOC-one-related complex (BORC) which is composed of BLOC1S1, BLOC1S2, BORCS5, BORCS6, BORCS7, BORCS8, KXD1 and SNAPIN.

Its subcellular location is the lysosome membrane. In terms of biological role, as part of the BORC complex may play a role in lysosomes movement and localization at the cell periphery. Associated with the cytosolic face of lysosomes, the BORC complex may recruit ARL8B and couple lysosomes to microtubule plus-end-directed kinesin motor. The protein is BLOC-1-related complex subunit 7 of Pongo abelii (Sumatran orangutan).